Reading from the N-terminus, the 468-residue chain is Transmembrane protein 151A (468 aa).

The segment at 1–20 (MPEGEGGDCGEVPALVPDGE) is disordered. 2 helical membrane passes run 45 to 65 (CLLL…CRLA) and 98 to 118 (YLYI…AECW). A disordered region spans residues 384-438 (VSSNSLPPARPSGPRLPFSRSRLSLGAGGRTTPGVFRSLSGGPLGRRGEDTEPLE).

It belongs to the TMEM151 family. As to expression, highly expressed in the central nervous system (CNS) including the cerebral cortex, hippocampus, spinal cord, brainstem, and thalamus. Expression is relatively low during postnatal stages but highly expressed at postnatal day 14 (P14), and declined in adulthood. Also expressed in the stomach, heart, liver, spleen, lung, kidney, and muscle.

Its subcellular location is the endoplasmic reticulum membrane. It is found in the cell projection. The protein localises to the axon. It localises to the dendrite. This chain is Transmembrane protein 151A (Tmem151a), found in Mus musculus (Mouse).